The primary structure comprises 301 residues: TLR adapter interacting with SLC15A4 on the lysosome (301 aa).

The pLxIS motif signature appears at 290-294 (SLHIS). Ser294 carries the phosphoserine modification.

As to quaternary structure, interacts (via pLxIS motif) with IRF5; leading to IRF5 activation. Interacts with SLC15A4; leading to its recruitment to endolysosome. In terms of processing, the phosphorylated pLxIS motif constitutes an IRF5-binding motif, leading to recruitment of the transcription factor IRF5 to induce type-I interferons and other cytokines. In terms of tissue distribution, highly expressed in immune cell types such as B-cells, neutrophils, dendritic cells and monocytes, the expression levels are two-three-fold higher in female cells compared to male cells (at protein level). Expressed at low levels in T-cells and NK cells.

Its subcellular location is the lysosome membrane. The protein localises to the endosome membrane. The protein resides in the nucleus. It is found in the cytoplasm. Functionally, innate immune adapter that mediates the recruitment and activation of IRF5 downstream of endolysosomal toll-like receptors TLR7, TLR8 and TLR9. Following recruitment to endolysosome by SLC15A4 downstream of TLR7, TLR8 and TLR9, specifically recruits IRF5 transcription factor via its pLxIS motif, leading to IRF5 activation and subsequent expression of type I interferons. Plays a role in the regulation of endolysosomal pH in immune cells such as B-cells, dendritic cells and monocytes. In Homo sapiens (Human), this protein is TLR adapter interacting with SLC15A4 on the lysosome.